Here is a 545-residue protein sequence, read N- to C-terminus: Glucose-6-phosphate isomerase (545 aa).

Glu345 (proton donor) is an active-site residue. Residues His376 and Lys514 contribute to the active site.

Belongs to the GPI family.

It localises to the cytoplasm. The enzyme catalyses alpha-D-glucose 6-phosphate = beta-D-fructose 6-phosphate. The protein operates within carbohydrate biosynthesis; gluconeogenesis. Its pathway is carbohydrate degradation; glycolysis; D-glyceraldehyde 3-phosphate and glycerone phosphate from D-glucose: step 2/4. Catalyzes the reversible isomerization of glucose-6-phosphate to fructose-6-phosphate. This Leptothrix cholodnii (strain ATCC 51168 / LMG 8142 / SP-6) (Leptothrix discophora (strain SP-6)) protein is Glucose-6-phosphate isomerase.